The primary structure comprises 361 residues: tRNA 2-selenouridine synthase (361 aa).

One can recognise a Rhodanese domain in the interval 11–134 (LLADTPLIDV…LRQTAIQATW (124 aa)). The active-site S-selanylcysteine intermediate is the cysteine 94.

This sequence belongs to the SelU family. In terms of assembly, monomer.

It catalyses the reaction 5-methylaminomethyl-2-thiouridine(34) in tRNA + selenophosphate + (2E)-geranyl diphosphate + H2O + H(+) = 5-methylaminomethyl-2-selenouridine(34) in tRNA + (2E)-thiogeraniol + phosphate + diphosphate. It carries out the reaction 5-methylaminomethyl-2-thiouridine(34) in tRNA + (2E)-geranyl diphosphate = 5-methylaminomethyl-S-(2E)-geranyl-thiouridine(34) in tRNA + diphosphate. The catalysed reaction is 5-methylaminomethyl-S-(2E)-geranyl-thiouridine(34) in tRNA + selenophosphate + H(+) = 5-methylaminomethyl-2-(Se-phospho)selenouridine(34) in tRNA + (2E)-thiogeraniol. The enzyme catalyses 5-methylaminomethyl-2-(Se-phospho)selenouridine(34) in tRNA + H2O = 5-methylaminomethyl-2-selenouridine(34) in tRNA + phosphate. In terms of biological role, involved in the post-transcriptional modification of the uridine at the wobble position (U34) of tRNA(Lys), tRNA(Glu) and tRNA(Gln). Catalyzes the conversion of 2-thiouridine (S2U-RNA) to 2-selenouridine (Se2U-RNA). Acts in a two-step process involving geranylation of 2-thiouridine (S2U) to S-geranyl-2-thiouridine (geS2U) and subsequent selenation of the latter derivative to 2-selenouridine (Se2U) in the tRNA chain. In Salmonella schwarzengrund (strain CVM19633), this protein is tRNA 2-selenouridine synthase.